The chain runs to 149 residues: Ubiquitin-conjugating enzyme E2 pex4 (149 aa).

The region spanning 1-149 (MAARLMKEYK…ARMYTRLYGC (149 aa)) is the UBC core domain. The active-site Glycyl thioester intermediate is Cys-86.

This sequence belongs to the ubiquitin-conjugating enzyme family.

The enzyme catalyses S-ubiquitinyl-[E1 ubiquitin-activating enzyme]-L-cysteine + [E2 ubiquitin-conjugating enzyme]-L-cysteine = [E1 ubiquitin-activating enzyme]-L-cysteine + S-ubiquitinyl-[E2 ubiquitin-conjugating enzyme]-L-cysteine.. Its pathway is protein modification; protein ubiquitination. Its function is as follows. Catalyzes the covalent attachment of ubiquitin to other proteins. Essential for peroxisome biogenesis. The protein is Ubiquitin-conjugating enzyme E2 pex4 (pex4) of Dictyostelium discoideum (Social amoeba).